Consider the following 200-residue polypeptide: ATP synthase subunit s, mitochondrial (200 aa).

The N-terminal 25 residues, 1–25 (MMPFGKISQQLCGVKKLPWSCDSRY), are a transit peptide targeting the mitochondrion. Residues 1–61 (MMPFGKISQQ…SEWLLRCGAM (61 aa)) are N-terminal domain. Glycine 59 is a Mg(2+) binding site. LRR repeat units lie at residues 62–87 (VRYH…KYKI), 88–116 (QAID…KIRL), 117–141 (CKCH…KTIL), and 142–173 (EMEI…LSDL). Mg(2+) is bound at residue threonine 93.

This sequence belongs to the ATP synthase subunit s family. As to quaternary structure, homotetramer. Associates with ATP synthase.

The protein localises to the mitochondrion. The protein resides in the mitochondrion inner membrane. Functionally, involved in regulation of mitochondrial membrane ATP synthase. Necessary for H(+) conduction of ATP synthase. Facilitates energy-driven catalysis of ATP synthesis by blocking a proton leak through an alternative proton exit pathway. In Homo sapiens (Human), this protein is ATP synthase subunit s, mitochondrial.